The following is a 341-amino-acid chain: Adenylosuccinate synthetase (341 aa).

GTP-binding positions include 12–18 (GDEGKGK) and 42–44 (GHS). Aspartate 13 functions as the Proton acceptor in the catalytic mechanism. Residues aspartate 13 and glycine 42 each contribute to the Mg(2+) site. IMP is bound by residues 13–16 (DEGK), 40–43 (NAGH), threonine 127, arginine 141, glutamine 179, threonine 194, and arginine 256. Histidine 43 functions as the Proton donor in the catalytic mechanism. 252–258 (VVTGRKR) contacts substrate. Residues arginine 258, 284–286 (CID), and 324–326 (STG) each bind GTP.

This sequence belongs to the adenylosuccinate synthetase family. Homodimer. The cofactor is Mg(2+).

It is found in the cytoplasm. The enzyme catalyses IMP + L-aspartate + GTP = N(6)-(1,2-dicarboxyethyl)-AMP + GDP + phosphate + 2 H(+). It participates in purine metabolism; AMP biosynthesis via de novo pathway; AMP from IMP: step 1/2. Plays an important role in the de novo pathway of purine nucleotide biosynthesis. Catalyzes the first committed step in the biosynthesis of AMP from IMP. The protein is Adenylosuccinate synthetase of Methanosphaera stadtmanae (strain ATCC 43021 / DSM 3091 / JCM 11832 / MCB-3).